Consider the following 738-residue polypeptide: Transcription activator of gluconeogenesis SMAC_06113 (738 aa).

The tract at residues 1–65 is disordered; that stretch reads MPDDVGPAEA…KYDPKDPLRP (65 aa). 2 stretches are compositionally biased toward basic and acidic residues: residues 28–39 and 51–64; these read ATTKDDDEKMAE and GDQKKKYDPKDPLR. Positions 74-102 form a DNA-binding region, zn(2)-C6 fungal-type; that stretch reads CYACQRAHLTCGDERPCQRCIKRGLAEAC. Disordered stretches follow at residues 255-278, 328-404, 530-579, and 636-673; these read SSGAAETPPRDPSISQQGTAGDVG, HAYA…KRQR, GTNS…KEQP, and SVPTTAGGSGSSNGTVVNGGPDSSPAGKTERERSTGAN. Polar residues-rich tracts occupy residues 337–351 and 530–540; these read TSLQSPSTENNSPQP and GTNSDTLSVSS. Residues 475-546 form the PAS domain; the sequence is ALFEHEEFMH…SVSSKGGRGG (72 aa). 2 stretches are compositionally biased toward low complexity: residues 568–579 and 636–655; these read QQQQSQQQKEQP and SVPTTAGGSGSSNGTVVNGG.

It belongs to the ERT1/acuK family.

The protein resides in the nucleus. Its function is as follows. Transcription factor which regulates nonfermentable carbon utilization. Activator of gluconeogenetic genes. This Sordaria macrospora (strain ATCC MYA-333 / DSM 997 / K(L3346) / K-hell) protein is Transcription activator of gluconeogenesis SMAC_06113.